A 533-amino-acid polypeptide reads, in one-letter code: DNA-directed RNA polymerase III subunit RPC3 (533 aa).

Ser-194 is modified (phosphoserine). The disordered stretch occupies residues 197–230 (GKGKRRRSSDEDATGEPKAKRPKQTTDNKEPIPD). Residues 211–228 (GEPKAKRPKQTTDNKEPI) show a composition bias toward basic and acidic residues.

It belongs to the eukaryotic RPC3/POLR3C RNA polymerase subunit family. As to quaternary structure, component of the RNA polymerase III complex consisting of 17 subunits: a ten-subunit horseshoe-shaped catalytic core composed of POLR3A/RPC1, POLR3B/RPC2, POLR1C/RPAC1, POLR1D/RPAC2, POLR3K/RPC10, POLR2E/RPABC1, POLR2F/RPABC2, POLR2H/RPABC3, POLR2K/RPABC4 and POLR2L/RPABC5; a mobile stalk composed of two subunits POLR3H/RPC8 and CRCP/RPC9, protruding from the core and functioning primarily in transcription initiation; and additional subunits homologous to general transcription factors of the RNA polymerase II machinery, POLR3C/RPC3-POLR3F/RPC6-POLR3G/RPC7 heterotrimer required for transcription initiation and POLR3D/RPC4-POLR3E/RPC5 heterodimer involved in both transcription initiation and termination. Directly interacts with POLR3G/RPC7 and POLR3GL. Directly interacts with POLR3F/RPC6. Interacts with GTF3C4. As part of the RNA polymerase III complex, interacts with PKP2.

Its subcellular location is the nucleus. Functionally, DNA-dependent RNA polymerase catalyzes the transcription of DNA into RNA using the four ribonucleoside triphosphates as substrates. Specific peripheric component of RNA polymerase III (Pol III) which synthesizes small non-coding RNAs including 5S rRNA, snRNAs, tRNAs and miRNAs from at least 500 distinct genomic loci. Part of POLR3C/RPC3-POLR3F/RPC6-POLR3G/RPC7 heterotrimer, coordinates the dynamics of Pol III stalk and clamp modules during the transition from apo to elongation state. Pol III plays a key role in sensing and limiting infection by intracellular bacteria and DNA viruses. Acts as a nuclear and cytosolic DNA sensor involved in innate immune response. Can sense non-self dsDNA that serves as template for transcription into dsRNA. The non-self RNA polymerase III transcripts, such as Epstein-Barr virus-encoded RNAs (EBERs) induce type I interferon and NF-kappa-B through the RIG-I pathway. Preferentially binds single-stranded DNA (ssDNA) in a sequence-independent manner. In Bos taurus (Bovine), this protein is DNA-directed RNA polymerase III subunit RPC3 (POLR3C).